Reading from the N-terminus, the 320-residue chain is Malate dehydrogenase (320 aa).

NAD(+) contacts are provided by residues 10–15 and D34; that span reads GSGMIG. R83 and R89 together coordinate substrate. NAD(+) contacts are provided by residues N96 and 119 to 121; that span reads ITN. Substrate contacts are provided by N121 and R152. H176 serves as the catalytic Proton acceptor.

It belongs to the LDH/MDH superfamily. MDH type 3 family.

It catalyses the reaction (S)-malate + NAD(+) = oxaloacetate + NADH + H(+). Catalyzes the reversible oxidation of malate to oxaloacetate. The polypeptide is Malate dehydrogenase (Brucella suis (strain ATCC 23445 / NCTC 10510)).